Reading from the N-terminus, the 126-residue chain is Holo-[acyl-carrier-protein] synthase (126 aa).

Aspartate 9 and glutamate 58 together coordinate Mg(2+).

This sequence belongs to the P-Pant transferase superfamily. AcpS family. Mg(2+) serves as cofactor.

It localises to the cytoplasm. It catalyses the reaction apo-[ACP] + CoA = holo-[ACP] + adenosine 3',5'-bisphosphate + H(+). Functionally, transfers the 4'-phosphopantetheine moiety from coenzyme A to a Ser of acyl-carrier-protein. In Vibrio parahaemolyticus serotype O3:K6 (strain RIMD 2210633), this protein is Holo-[acyl-carrier-protein] synthase.